A 399-amino-acid polypeptide reads, in one-letter code: Cell division protein FtsZ (399 aa).

GTP-binding positions include 30-34 (GGGSN), 117-119 (GTG), glutamate 148, lysine 152, and aspartate 196. The disordered stretch occupies residues 349–368 (TLMSGNQNAPSGSYEQQDSS). The segment covering 351–368 (MSGNQNAPSGSYEQQDSS) has biased composition (polar residues).

Belongs to the FtsZ family. As to quaternary structure, homodimer. Polymerizes to form a dynamic ring structure in a strictly GTP-dependent manner. Interacts directly with several other division proteins.

The protein resides in the cytoplasm. Its function is as follows. Essential cell division protein that forms a contractile ring structure (Z ring) at the future cell division site. The regulation of the ring assembly controls the timing and the location of cell division. One of the functions of the FtsZ ring is to recruit other cell division proteins to the septum to produce a new cell wall between the dividing cells. Binds GTP and shows GTPase activity. The sequence is that of Cell division protein FtsZ from Borreliella burgdorferi (strain ATCC 35210 / DSM 4680 / CIP 102532 / B31) (Borrelia burgdorferi).